The following is an 89-amino-acid chain: Small ribosomal subunit protein uS15 (89 aa).

Belongs to the universal ribosomal protein uS15 family. Part of the 30S ribosomal subunit. Forms a bridge to the 50S subunit in the 70S ribosome, contacting the 23S rRNA.

One of the primary rRNA binding proteins, it binds directly to 16S rRNA where it helps nucleate assembly of the platform of the 30S subunit by binding and bridging several RNA helices of the 16S rRNA. Its function is as follows. Forms an intersubunit bridge (bridge B4) with the 23S rRNA of the 50S subunit in the ribosome. The sequence is that of Small ribosomal subunit protein uS15 from Laribacter hongkongensis (strain HLHK9).